A 130-amino-acid chain; its full sequence is Small ribosomal subunit protein uS9 (130 aa).

The protein belongs to the universal ribosomal protein uS9 family.

In Halalkalibacterium halodurans (strain ATCC BAA-125 / DSM 18197 / FERM 7344 / JCM 9153 / C-125) (Bacillus halodurans), this protein is Small ribosomal subunit protein uS9.